The sequence spans 326 residues: Protoheme IX farnesyltransferase (326 aa).

The next 8 membrane-spanning stretches (helical) occupy residues 35–55, 60–80, 106–126, 129–149, 157–177, 185–205, 238–258, and 289–309; these read LIPL…GWPL, LICT…LNCL, TAFI…VSGV, LAAG…TALL, IVVG…AATG, WLFA…ALLL, VLLS…YGLM, and WSIL…SALA.

It belongs to the UbiA prenyltransferase family. Protoheme IX farnesyltransferase subfamily.

The protein resides in the cell inner membrane. It carries out the reaction heme b + (2E,6E)-farnesyl diphosphate + H2O = Fe(II)-heme o + diphosphate. Its pathway is porphyrin-containing compound metabolism; heme O biosynthesis; heme O from protoheme: step 1/1. Functionally, converts heme B (protoheme IX) to heme O by substitution of the vinyl group on carbon 2 of heme B porphyrin ring with a hydroxyethyl farnesyl side group. This is Protoheme IX farnesyltransferase from Synechococcus sp. (strain CC9902).